Reading from the N-terminus, the 144-residue chain is Putative low molecular weight protein-tyrosine-phosphatase (144 aa).

Residue cysteine 9 is the Nucleophile of the active site. Arginine 15 is a catalytic residue. The Proton donor role is filled by aspartate 115.

This sequence belongs to the low molecular weight phosphotyrosine protein phosphatase family.

It catalyses the reaction O-phospho-L-tyrosyl-[protein] + H2O = L-tyrosyl-[protein] + phosphate. This Klebsiella pneumoniae protein is Putative low molecular weight protein-tyrosine-phosphatase.